A 24-amino-acid chain; its full sequence is Flavin reductase (NADPH) (24 aa).

The NADP(+) site is built by Gly9, Thr11, Gly12, and Thr14.

The protein belongs to the BLVRB family. Monomer. Detected in erythrocytes (at protein level).

Its subcellular location is the cytoplasm. The enzyme catalyses reduced riboflavin + NADP(+) = riboflavin + NADPH + 2 H(+). It catalyses the reaction bilirubin IXbeta + NADP(+) = biliverdin IXbeta + NADPH + H(+). It carries out the reaction FMNH2 + NAD(+) = FMN + NADH + 2 H(+). The catalysed reaction is FMNH2 + NADP(+) = FMN + NADPH + 2 H(+). The enzyme catalyses S-nitroso-CoA + L-cysteinyl-[protein] = S-nitroso-L-cysteinyl-[protein] + CoA. It catalyses the reaction L-cysteinyl-[SCAN] + S-nitroso-CoA = S-nitroso-L-cysteinyl-[SCAN] + CoA. It carries out the reaction S-nitroso-L-cysteinyl-[SCAN] + L-cysteinyl-[protein] = L-cysteinyl-[SCAN] + S-nitroso-L-cysteinyl-[protein]. Functionally, enzyme that can both act as a NAD(P)H-dependent reductase and a S-nitroso-CoA-dependent nitrosyltransferase. Promotes fetal heme degradation during development. Also expressed in adult tissues, where it acts as a regulator of hematopoiesis, intermediary metabolism (glutaminolysis, glycolysis, TCA cycle and pentose phosphate pathway) and insulin signaling. Has a broad specificity oxidoreductase activity by catalyzing the NAD(P)H-dependent reduction of a variety of flavins, such as riboflavin, FAD or FMN, biliverdins, methemoglobin and PQQ (pyrroloquinoline quinone). Contributes to fetal heme catabolism by catalyzing reduction of biliverdin IXbeta into bilirubin IXbeta in the liver. Biliverdin IXbeta, which constitutes the major heme catabolite in the fetus is not present in adult. Does not reduce bilirubin IXalpha. Can also reduce the complexed Fe(3+) iron to Fe(2+) in the presence of FMN and NADPH. Acts as a protein nitrosyltransferase by catalyzing nitrosylation of cysteine residues of target proteins, such as HMOX2, INSR and IRS1. S-nitroso-CoA-dependent nitrosyltransferase activity is mediated via a 'ping-pong' mechanism: BLVRB first associates with both S-nitroso-CoA and protein substrate, nitric oxide group is then transferred from S-nitroso-CoA to Cys residues of BLVRB and from S-nitroso-BLVRB to the protein substrate. Inhibits insulin signaling by mediating nitrosylation of INSR and IRS1, leading to their inhibition. This Aquarana catesbeiana (American bullfrog) protein is Flavin reductase (NADPH) (BLVRB).